The sequence spans 207 residues: Ribosomal RNA small subunit methyltransferase G (207 aa).

S-adenosyl-L-methionine is bound by residues Gly74, Phe79, 124–125, and Arg138; that span reads VE.

This sequence belongs to the methyltransferase superfamily. RNA methyltransferase RsmG family.

It is found in the cytoplasm. The enzyme catalyses guanosine(527) in 16S rRNA + S-adenosyl-L-methionine = N(7)-methylguanosine(527) in 16S rRNA + S-adenosyl-L-homocysteine. Specifically methylates the N7 position of guanine in position 527 of 16S rRNA. This chain is Ribosomal RNA small subunit methyltransferase G, found in Hyphomonas neptunium (strain ATCC 15444).